The following is a 172-amino-acid chain: Adenine phosphoribosyltransferase (172 aa).

It belongs to the purine/pyrimidine phosphoribosyltransferase family. Homodimer.

The protein resides in the cytoplasm. It catalyses the reaction AMP + diphosphate = 5-phospho-alpha-D-ribose 1-diphosphate + adenine. It participates in purine metabolism; AMP biosynthesis via salvage pathway; AMP from adenine: step 1/1. Catalyzes a salvage reaction resulting in the formation of AMP, that is energically less costly than de novo synthesis. This chain is Adenine phosphoribosyltransferase, found in Clostridium kluyveri (strain NBRC 12016).